The sequence spans 470 residues: Cysteine--tRNA ligase (470 aa).

Cys-28 is a binding site for Zn(2+). The short motif at 30–40 is the 'HIGH' region element; it reads PTVYNYIHIGN. Zn(2+) contacts are provided by Cys-212, His-237, and Glu-241. A 'KMSKS' region motif is present at residues 271–275; the sequence is KMSKS. Lys-274 contacts ATP.

It belongs to the class-I aminoacyl-tRNA synthetase family. In terms of assembly, monomer. The cofactor is Zn(2+).

It is found in the cytoplasm. The enzyme catalyses tRNA(Cys) + L-cysteine + ATP = L-cysteinyl-tRNA(Cys) + AMP + diphosphate. The chain is Cysteine--tRNA ligase from Levilactobacillus brevis (strain ATCC 367 / BCRC 12310 / CIP 105137 / JCM 1170 / LMG 11437 / NCIMB 947 / NCTC 947) (Lactobacillus brevis).